A 219-amino-acid chain; its full sequence is Cytidylate kinase (219 aa).

21–29 (GPAASGKGT) is a binding site for ATP.

Belongs to the cytidylate kinase family. Type 1 subfamily.

The protein resides in the cytoplasm. The catalysed reaction is CMP + ATP = CDP + ADP. It catalyses the reaction dCMP + ATP = dCDP + ADP. This is Cytidylate kinase from Rickettsia prowazekii (strain Madrid E).